We begin with the raw amino-acid sequence, 115 residues long: Ustilagic acid biosynthesis cluster protein orf3 (115 aa).

The first 38 residues, 1–38 (MTYSKIACSLGKRGIARAPNQASSFFLLLFLFAKFSQQ), serve as a signal peptide directing secretion. The disordered stretch occupies residues 42–62 (SPCLASSGVAKSRGPASTDRP).

Its pathway is secondary metabolite biosynthesis. Its function is as follows. Part of the gene cluster that mediates the biosynthesis of the glycolipid biosurfactant ustilagic acid (UA). UA is a secreted cellobiose glycolipid that is toxic for many microorganisms and confers biocontrol activity to U.maydis. UA consists of 15,16-dihydroxypalmitic or 2,15,16-trihydroxypalmitic acid, which is O-glycosidically linked to cellobiose at its terminal hydroxyl group. In addition, the cellobiose moiety is acetylated and acylated with a short-chain hydroxy fatty acid. UA biosynthesis starts with omega-hydroxylation of palmitic acid catalyzed by the cytochrome P450 monooxygenase cyp1. Terminal hydroxylation of palmitic acid precedes subterminal hydroxylation catalyzed by the cytochrome P450 monooxygenase cyp2. Sequential glucosylation of the hydroxy fatty acid is probably catalyzed by the glycosyltransferase ugt1. The cellobiose lipid is further decorated by acetylation of the proximal glucose residue and by acylation with a short-chain beta-hydroxy fatty acid at the distal glucose residue. The acyltransferase uat1 may be a good candidate for catalyzing either acetylation or acylation of the cellobiose lipid. The fatty acid synthase fas2 may be involved in synthesis of the carbon backbone of the short-chain beta-hydroxy fatty acid esterified to the cellobiose disaccharide. The secreted UA consists of a mixture of both alpha-hydroxylated and non-hydroxylated glycolipids; therefore, alpha-hydroxylation of the long-chain fatty, catalyzed by the fatty acid hydroxylase ahd1, occurs late in UA biosynthesis and may be the last step before secretion. In Mycosarcoma maydis (Corn smut fungus), this protein is Ustilagic acid biosynthesis cluster protein orf3.